Consider the following 434-residue polypeptide: GTPase Obg (434 aa).

An Obg domain is found at 2–160 (PTFVDQTKIE…RVLRLELKLL (159 aa)). Residues 161–334 (ADVGLVGFPS…LMNDTATLVE (174 aa)) enclose the OBG-type G domain. Residues 167–174 (GFPSVGKS), 192–196 (FTTLT), 214–217 (DLPG), 284–287 (SQMD), and 315–317 (SSV) contribute to the GTP site. Residues S174 and T194 each coordinate Mg(2+). The OCT domain occupies 356–434 (YKAPQKNEFT…IGKFVFEFVQ (79 aa)).

This sequence belongs to the TRAFAC class OBG-HflX-like GTPase superfamily. OBG GTPase family. As to quaternary structure, monomer. The cofactor is Mg(2+).

The protein localises to the cytoplasm. An essential GTPase which binds GTP, GDP and possibly (p)ppGpp with moderate affinity, with high nucleotide exchange rates and a fairly low GTP hydrolysis rate. Plays a role in control of the cell cycle, stress response, ribosome biogenesis and in those bacteria that undergo differentiation, in morphogenesis control. The chain is GTPase Obg from Lactobacillus helveticus (strain DPC 4571).